Consider the following 2410-residue polypeptide: Genome polyprotein 1 (2410 aa).

The segment at 1-22 (MEQTLAQAVSRKSKTDTPMAEE) is disordered. A Helicase ATP-binding domain is found at 474–632 (KMADANNCWS…AARKYPLHVE (159 aa)). Residue 487 to 494 (GHTGSGKS) participates in ATP binding. The Helicase C-terminal domain occupies 647-813 (GGGDLLDISK…NVPFYMNETF (167 aa)). Position 1234 is an O-(5'-phospho-RNA)-tyrosine (Tyr1234). The region spanning 1359–1573 (ITLEASTGIL…CGYASHTALF (215 aa)) is the Peptidase C4 domain. Catalysis depends on for nuclear inclusion protein A activity residues His1404, Asp1440, and Cys1507. Residues 1857-1980 (WLHGSGDGSR…AISPQFDEEF (124 aa)) enclose the RdRp catalytic domain. The disordered stretch occupies residues 2173–2200 (TRTPTEDDGKLKTPSGARIPSSAADGNW).

The protein belongs to the bymoviruses polyprotein 1 family. VPg is uridylylated by the polymerase and is covalently attached to the 5'-end of the genomic RNA. This uridylylated form acts as a nucleotide-peptide primer for the polymerase. Post-translationally, the viral RNA1 of bymoviruses is expressed as a single polyprotein which undergoes post-translational proteolytic processing by the main proteinase NIa-pro resulting in the production of at least eight individual proteins.

It is found in the host cytoplasmic vesicle. The protein resides in the virion. It carries out the reaction RNA(n) + a ribonucleoside 5'-triphosphate = RNA(n+1) + diphosphate. The enzyme catalyses Hydrolyzes glutaminyl bonds, and activity is further restricted by preferences for the amino acids in P6 - P1' that vary with the species of potyvirus, e.g. Glu-Xaa-Xaa-Tyr-Xaa-Gln-|-(Ser or Gly) for the enzyme from tobacco etch virus. The natural substrate is the viral polyprotein, but other proteins and oligopeptides containing the appropriate consensus sequence are also cleaved.. Indispensable for virus replication. In terms of biological role, mediates the cap-independent, EIF4E-dependent translation of viral genomic RNAs. Binds to the cap-binding site of host EIF4E and thus interferes with the host EIF4E-dependent mRNA export and translation. VPg-RNA directly binds EIF4E and is a template for transcription. Also forms trimeric complexes with EIF4E-EIF4G, which are templates for translation. Its function is as follows. Has RNA-binding and proteolytic activities. Functionally, an RNA-dependent RNA polymerase that plays an essential role in the virus replication. The polypeptide is Genome polyprotein 1 (Hordeum vulgare (Barley)).